A 792-amino-acid polypeptide reads, in one-letter code: Probable phosphoketolase (792 aa).

This sequence belongs to the XFP family. Requires thiamine diphosphate as cofactor.

This Brucella melitensis biotype 1 (strain ATCC 23456 / CCUG 17765 / NCTC 10094 / 16M) protein is Probable phosphoketolase.